Here is a 212-residue protein sequence, read N- to C-terminus: 3-oxo-tetronate 4-phosphate decarboxylase (212 aa).

E79 (proton acceptor) is an active-site residue. 3 residues coordinate Zn(2+): E79, H98, and H100. The active-site Proton donor is Y125. H165 contacts Zn(2+).

Belongs to the aldolase class II family. AraD/FucA subfamily. It depends on Zn(2+) as a cofactor.

The catalysed reaction is 3-dehydro-4-O-phospho-D-erythronate + H(+) = dihydroxyacetone phosphate + CO2. It carries out the reaction 3-dehydro-4-O-phospho-L-erythronate + H(+) = dihydroxyacetone phosphate + CO2. Functionally, catalyzes the decarboxylation of 3-oxo-tetronate 4-phosphate to dihydroxyacetone phosphate (DHAP) and CO(2). The chain is 3-oxo-tetronate 4-phosphate decarboxylase from Escherichia coli (strain K12).